Here is a 214-residue protein sequence, read N- to C-terminus: Adenylate kinase (214 aa).

10–15 (GAGKGT) is a binding site for ATP. Residues 30 to 59 (STGDMLRAAVKAGTPLGLEAKKVMDAGQLV) are NMP. Residues T31, R36, 57–59 (QLV), 85–88 (GFPR), and Q92 each bind AMP. The interval 122-159 (GRRVHPGSGRVYHIVFNQPKVEGKDDVTGEDLAIRPDD) is LID. ATP contacts are provided by residues R123 and 132–133 (VY). AMP is bound by residues R156 and R167. Q200 is an ATP binding site.

The protein belongs to the adenylate kinase family. In terms of assembly, monomer.

It localises to the cytoplasm. The catalysed reaction is AMP + ATP = 2 ADP. Its pathway is purine metabolism; AMP biosynthesis via salvage pathway; AMP from ADP: step 1/1. Catalyzes the reversible transfer of the terminal phosphate group between ATP and AMP. Plays an important role in cellular energy homeostasis and in adenine nucleotide metabolism. In Shewanella halifaxensis (strain HAW-EB4), this protein is Adenylate kinase.